A 117-amino-acid chain; its full sequence is Large ribosomal subunit protein bL19 (117 aa).

It belongs to the bacterial ribosomal protein bL19 family.

This protein is located at the 30S-50S ribosomal subunit interface and may play a role in the structure and function of the aminoacyl-tRNA binding site. The sequence is that of Large ribosomal subunit protein bL19 from Aliivibrio salmonicida (strain LFI1238) (Vibrio salmonicida (strain LFI1238)).